The primary structure comprises 181 residues: Large ribosomal subunit protein uL5c (181 aa).

Belongs to the universal ribosomal protein uL5 family. In terms of assembly, part of the 50S ribosomal subunit; contacts the 5S rRNA.

The protein resides in the plastid. It is found in the chloroplast. Functionally, binds 5S rRNA, forms part of the central protuberance of the 50S subunit. This is Large ribosomal subunit protein uL5c (rpl5) from Porphyra purpurea (Red seaweed).